Here is a 947-residue protein sequence, read N- to C-terminus: Netrin receptor unc-5 (947 aa).

Positions 43–141 (VIRNKPLRLQ…VHLAYMRKHF (99 aa)) constitute an Ig-like domain. Cystine bridges form between Cys53–Cys112, Cys160–Cys209, Cys243–Cys295, Cys247–Cys299, and Cys273–Cys285. One can recognise an Ig-like C2-type domain in the interval 139–226 (KHFLKSPVAQ…SRKTDPVEVQ (88 aa)). A glycan (N-linked (GlcNAc...) asparagine) is linked at Asn206. TSP type-1 domains are found at residues 230 to 300 (DGGW…VPCK) and 302 to 354 (DGGW…QLCT). C-linked (Man) tryptophan glycosylation is found at Trp305 and Trp308. Residues 369–389 (GSVASIFIVASFILAILAMFC) traverse the membrane as a helical segment. Over 390-947 (CKRGNSKKSK…LSAFPQIVSP (558 aa)) the chain is Cytoplasmic. Tyr510 carries the post-translational modification Phosphotyrosine. Residues 530–658 (NIVAAQIDSN…LNTNMFVQFE (129 aa)) form the ZU5 domain. Residues 857 to 938 (ELARLLDMPN…DAVMVLERFL (82 aa)) enclose the Death domain.

This sequence belongs to the unc-5 family. In terms of assembly, interacts (via cytoplasmic domain) with src-1 (via SH2 domain and SH3 domain). Interacts with madd-4. Interacts with unc-129; the interaction is direct. In terms of processing, phosphorylated on different cytoplasmic tyrosine residues. May be phosphorylated on tyrosine residues by src-1. Tyrosine phosphorylation is unc-6-dependent. Post-translationally, glycosylated via C-mannosylation by dpy-19 at Trp-305 and Trp-308. Expressed in cell bodies and axons of the VNC motor neurons that extend axons to the dorsal midline and within the ventral nerve cord. Expressed in gonadal distal tip cells (DTC).

It is found in the cell membrane. Its subcellular location is the membrane raft. The protein resides in the cell projection. The protein localises to the neuron projection. Its function is as follows. Receptor for netrin (unc-6) required for axon guidance. Mediates axon repulsion of neuronal growth cones in the developing nervous system upon ligand binding. Axon migration is mediated by the secreted unc-6, which promotes attraction of neurons and axons through binding to the unc-40 receptor, while repulsion requires both unc-5 and unc-40 receptors. Involved in the ventral-dorsal and anterior-posterior migration of distal tip cells along the body, which may be mediated by Wnt receptor mom-5, ced-10/Rac, ced-12/ELMO and mig-2/RhoG. The protein is Netrin receptor unc-5 of Caenorhabditis elegans.